Consider the following 264-residue polypeptide: S-adenosylmethionine decarboxylase proenzyme (264 aa).

S112 (schiff-base intermediate with substrate; via pyruvic acid) is an active-site residue. Residue S112 is modified to Pyruvic acid (Ser); by autocatalysis. The active-site Proton acceptor; for processing activity is the H117. C140 (proton donor; for catalytic activity) is an active-site residue.

This sequence belongs to the prokaryotic AdoMetDC family. Type 2 subfamily. As to quaternary structure, heterooctamer of four alpha and four beta chains arranged as a tetramer of alpha/beta heterodimers. Requires pyruvate as cofactor. In terms of processing, is synthesized initially as an inactive proenzyme. Formation of the active enzyme involves a self-maturation process in which the active site pyruvoyl group is generated from an internal serine residue via an autocatalytic post-translational modification. Two non-identical subunits are generated from the proenzyme in this reaction, and the pyruvate is formed at the N-terminus of the alpha chain, which is derived from the carboxyl end of the proenzyme. The post-translation cleavage follows an unusual pathway, termed non-hydrolytic serinolysis, in which the side chain hydroxyl group of the serine supplies its oxygen atom to form the C-terminus of the beta chain, while the remainder of the serine residue undergoes an oxidative deamination to produce ammonia and the pyruvoyl group blocking the N-terminus of the alpha chain.

The catalysed reaction is S-adenosyl-L-methionine + H(+) = S-adenosyl 3-(methylsulfanyl)propylamine + CO2. The protein operates within amine and polyamine biosynthesis; S-adenosylmethioninamine biosynthesis; S-adenosylmethioninamine from S-adenosyl-L-methionine: step 1/1. In terms of biological role, catalyzes the decarboxylation of S-adenosylmethionine to S-adenosylmethioninamine (dcAdoMet), the propylamine donor required for the synthesis of the polyamines spermine and spermidine from the diamine putrescine. The sequence is that of S-adenosylmethionine decarboxylase proenzyme from Shigella dysenteriae serotype 1 (strain Sd197).